The primary structure comprises 165 residues: Large ribosomal subunit protein uL10 (165 aa).

Belongs to the universal ribosomal protein uL10 family. In terms of assembly, part of the ribosomal stalk of the 50S ribosomal subunit. The N-terminus interacts with L11 and the large rRNA to form the base of the stalk. The C-terminus forms an elongated spine to which L12 dimers bind in a sequential fashion forming a multimeric L10(L12)X complex.

Forms part of the ribosomal stalk, playing a central role in the interaction of the ribosome with GTP-bound translation factors. In Shewanella piezotolerans (strain WP3 / JCM 13877), this protein is Large ribosomal subunit protein uL10.